The chain runs to 274 residues: Proteasome subunit beta (274 aa).

Residues 1-52 constitute a propeptide, removed in mature form; by autocatalysis; it reads MADPMGGAGRLPAVFMTPGTSSFTDFLSQSAPHLLPGARGGLPGPVTEVAHG. The Nucleophile role is filled by Thr-53.

It belongs to the peptidase T1B family. The 20S proteasome core is composed of 14 alpha and 14 beta subunits that assemble into four stacked heptameric rings, resulting in a barrel-shaped structure. The two inner rings, each composed of seven catalytic beta subunits, are sandwiched by two outer rings, each composed of seven alpha subunits. The catalytic chamber with the active sites is on the inside of the barrel. Has a gated structure, the ends of the cylinder being occluded by the N-termini of the alpha-subunits. Is capped by the proteasome-associated ATPase, ARC.

The protein localises to the cytoplasm. It catalyses the reaction Cleavage of peptide bonds with very broad specificity.. It participates in protein degradation; proteasomal Pup-dependent pathway. With respect to regulation, the formation of the proteasomal ATPase ARC-20S proteasome complex, likely via the docking of the C-termini of ARC into the intersubunit pockets in the alpha-rings, may trigger opening of the gate for substrate entry. Interconversion between the open-gate and close-gate conformations leads to a dynamic regulation of the 20S proteasome proteolysis activity. Its function is as follows. Component of the proteasome core, a large protease complex with broad specificity involved in protein degradation. This Frankia alni (strain DSM 45986 / CECT 9034 / ACN14a) protein is Proteasome subunit beta.